The sequence spans 175 residues: Homeobox expressed in ES cells 1 (175 aa).

The segment at 1-44 (MSPNLQEGARLVEGKPSSTSFSIESILGLDQKKDDAPSMKPHRP) is disordered. The segment at residues 108-167 (GRRPRTAFTQNQVEVLENVFRVNCYPGIDIREDLARKLNLEEDRIQIWFQNRRAKLKRSH) is a DNA-binding region (homeobox).

It belongs to the ANF homeobox family. Interacts with TLE1.

Its subcellular location is the nucleus. Functionally, required for the normal development of the forebrain, eyes and other anterior structures such as the olfactory placodes and pituitary gland. Possible transcriptional repressor. Binds to the palindromic PIII sequence, 5'-AGCTTGAGTCTAATTGAATTAACTGTAC-3'. This chain is Homeobox expressed in ES cells 1 (HESX1), found in Oryctolagus cuniculus (Rabbit).